The primary structure comprises 434 residues: Serine hydroxymethyltransferase 2 (434 aa).

(6S)-5,6,7,8-tetrahydrofolate is bound by residues Leu-136 and 140–142 (GHL). Residue Lys-245 is modified to N6-(pyridoxal phosphate)lysine.

Belongs to the SHMT family. In terms of assembly, homodimer. Requires pyridoxal 5'-phosphate as cofactor.

The protein localises to the cytoplasm. It catalyses the reaction (6R)-5,10-methylene-5,6,7,8-tetrahydrofolate + glycine + H2O = (6S)-5,6,7,8-tetrahydrofolate + L-serine. It participates in one-carbon metabolism; tetrahydrofolate interconversion. The protein operates within amino-acid biosynthesis; glycine biosynthesis; glycine from L-serine: step 1/1. In terms of biological role, catalyzes the reversible interconversion of serine and glycine with tetrahydrofolate (THF) serving as the one-carbon carrier. This reaction serves as the major source of one-carbon groups required for the biosynthesis of purines, thymidylate, methionine, and other important biomolecules. Also exhibits THF-independent aldolase activity toward beta-hydroxyamino acids, producing glycine and aldehydes, via a retro-aldol mechanism. The polypeptide is Serine hydroxymethyltransferase 2 (Rhodopseudomonas palustris (strain ATCC BAA-98 / CGA009)).